The following is a 632-amino-acid chain: PAN2-PAN3 deadenylation complex subunit PAN3 (632 aa).

Disordered regions lie at residues 1–22 (MQPGEGYHYDSGPNNAVHPHQL) and 99–127 (PTFGPGQHMNHRASHHHQSPQMAQQPPTL). The span at 107 to 116 (MNHRASHHHQ) shows a compositional bias: basic residues. Residues 117–127 (SPQMAQQPPTL) are compositionally biased toward polar residues. The interval 223-494 (KADSAIIGDI…TINEIMPMIG (272 aa)) is pseudokinase domain. ATP contacts are provided by residues arginine 270, 321-328 (DYYPLAGT), and 397-398 (NK). Positions 495–533 (GRFFTVMENMQAKTDVLEAELSREMENGRLFRLVAKMNT) form a coiled coil. A knob domain region spans residues 534 to 632 (VLERVEHGTD…LLGTNMMLHR (99 aa)).

This sequence belongs to the protein kinase superfamily. PAN3 family. Homodimer. Forms a heterotrimer with a catalytic subunit PAN2 to form the poly(A)-nuclease (PAN) deadenylation complex. Interacts (via PAM-2 motif) with poly(A)-binding protein (via PABC domain), conferring substrate specificity of the enzyme complex. Interacts with the GW182 family protein ain-1. As to expression, highly expressed in germ cells.

The protein localises to the cytoplasm. It is found in the P-body. In terms of biological role, regulatory subunit of the poly(A)-nuclease (PAN) deadenylation complex, one of two cytoplasmic mRNA deadenylases involved in general and miRNA-mediated mRNA turnover. PAN specifically shortens poly(A) tails of RNA and the activity is stimulated by poly(A)-binding protein (PABP). PAN deadenylation is followed by rapid degradation of the shortened mRNA tails by the CCR4-NOT complex. Deadenylated mRNAs are then degraded by two alternative mechanisms, namely exosome-mediated 3'-5' exonucleolytic degradation, or deadenylation-dependent mRNA decaping and subsequent 5'-3' exonucleolytic degradation by XRN1. PAN3 acts as a positive regulator for PAN activity, recruiting the catalytic subunit PAN2 to mRNA via its interaction with RNA and PABP, and to miRNA targets via its interaction with GW182 family proteins. Within the PAN complex, may positively regulate fertility. This chain is PAN2-PAN3 deadenylation complex subunit PAN3, found in Caenorhabditis elegans.